The following is an 82-amino-acid chain: Large ribosomal subunit protein uL23 (82 aa).

Belongs to the universal ribosomal protein uL23 family. In terms of assembly, part of the 50S ribosomal subunit. Contacts protein L29.

Functionally, binds to 23S rRNA. One of the proteins that surrounds the polypeptide exit tunnel on the outside of the ribosome. The chain is Large ribosomal subunit protein uL23 from Methanosarcina mazei (strain ATCC BAA-159 / DSM 3647 / Goe1 / Go1 / JCM 11833 / OCM 88) (Methanosarcina frisia).